The following is a 559-amino-acid chain: Potassium-transporting ATPase potassium-binding subunit (559 aa).

Transmembrane regions (helical) follow at residues Gly-5–Ser-25, Leu-27–Trp-47, Leu-63–Trp-83, Gly-132–Ile-152, Leu-170–Ile-190, Leu-253–Ala-273, Leu-283–Val-303, Phe-327–Val-347, Ala-356–Val-376, Gly-379–Gly-399, Met-416–Met-436, Leu-484–Ala-504, and Gly-524–Ile-544.

It belongs to the KdpA family. In terms of assembly, the system is composed of three essential subunits: KdpA, KdpB and KdpC.

The protein resides in the cell inner membrane. Part of the high-affinity ATP-driven potassium transport (or Kdp) system, which catalyzes the hydrolysis of ATP coupled with the electrogenic transport of potassium into the cytoplasm. This subunit binds the periplasmic potassium ions and delivers the ions to the membrane domain of KdpB through an intramembrane tunnel. The sequence is that of Potassium-transporting ATPase potassium-binding subunit from Salmonella typhimurium (strain LT2 / SGSC1412 / ATCC 700720).